Reading from the N-terminus, the 2182-residue chain is Autophagy-related protein 2 (2182 aa).

6 disordered regions span residues 291-375 (SPSL…PLAD), 392-426 (EQDYPLGDSEDALGIPYEFSNPQDDDAEDSPATPR), 523-630 (YTHE…STTL), 663-682 (DIDPENPRASTKQQEDVATP), 736-758 (GAFSVHGATHAQQRSSQGTSSVE), and 793-816 (DKKPSPAEGSKQDTASKDAPSKET). Composition is skewed to polar residues over residues 303–313 (NPPSRQATELS) and 322–331 (VSSSQASIRS). Over residues 332-347 (NEPESASHHSLPENDH) the composition is skewed to basic and acidic residues. Composition is skewed to acidic residues over residues 528–540 (AENEPAPEVEQTT) and 613–624 (WDDDYDDPEEEP). Positions 745 to 758 (HAQQRSSQGTSSVE) are enriched in polar residues. Positions 793–813 (DKKPSPAEGSKQDTASKDAPS) are enriched in basic and acidic residues.

This sequence belongs to the ATG2 family. As to quaternary structure, interacts with ATG18.

It localises to the preautophagosomal structure membrane. Its subcellular location is the endoplasmic reticulum membrane. The catalysed reaction is a 1,2-diacyl-sn-glycero-3-phosphocholine(in) = a 1,2-diacyl-sn-glycero-3-phosphocholine(out). It catalyses the reaction a 1,2-diacyl-sn-glycero-3-phospho-L-serine(in) = a 1,2-diacyl-sn-glycero-3-phospho-L-serine(out). The enzyme catalyses a 1,2-diacyl-sn-glycero-3-phosphoethanolamine(in) = a 1,2-diacyl-sn-glycero-3-phosphoethanolamine(out). Functionally, lipid transfer protein required for autophagosome completion and peroxisome degradation and peroxisome degradation. Tethers the edge of the isolation membrane (IM) to the endoplasmic reticulum (ER) and mediates direct lipid transfer from ER to IM for IM expansion. ATG2 binds to the ER exit site (ERES), which is the membrane source for autophagosome formation, using basic residues in its N-terminal region (NR) and to the expanding edge of the IM through its C-terminal region. The latter binding is assisted by an ATG18-PtdIns3P interaction. ATG2 then extracts phospholipids from the membrane source using its NR and transfers them to ATG9 to the IM through its predicted beta-sheet-rich structure for membrane expansion. Autophagy is required for proper vegetative growth, asexual/sexual reproduction, and full virulence. Autophagy is particularly involved in the biosynthesis of deoxynivalenol (DON), an important virulence determinant. This chain is Autophagy-related protein 2, found in Gibberella zeae (strain ATCC MYA-4620 / CBS 123657 / FGSC 9075 / NRRL 31084 / PH-1) (Wheat head blight fungus).